We begin with the raw amino-acid sequence, 370 residues long: Coproporphyrin III ferrochelatase (370 aa).

Ser-58 and Tyr-127 together coordinate Fe-coproporphyrin III. Positions 189 and 276 each coordinate Fe(2+).

This sequence belongs to the ferrochelatase family.

The protein resides in the cytoplasm. It catalyses the reaction Fe-coproporphyrin III + 2 H(+) = coproporphyrin III + Fe(2+). Its pathway is porphyrin-containing compound metabolism; protoheme biosynthesis. Involved in coproporphyrin-dependent heme b biosynthesis. Catalyzes the insertion of ferrous iron into coproporphyrin III to form Fe-coproporphyrin III. This is Coproporphyrin III ferrochelatase from Corynebacterium glutamicum (strain ATCC 13032 / DSM 20300 / JCM 1318 / BCRC 11384 / CCUG 27702 / LMG 3730 / NBRC 12168 / NCIMB 10025 / NRRL B-2784 / 534).